Reading from the N-terminus, the 213-residue chain is Ras-related protein Rab-4B (213 aa).

N-acetylalanine is present on Ala-2. 6 residues coordinate GDP: Gly-18, Thr-19, Gly-20, Lys-21, Ser-22, and Cys-23. GTP-binding residues include Gly-18, Thr-19, Gly-20, Lys-21, Ser-22, Cys-23, Ser-37, His-39, and Thr-40. A Mg(2+)-binding site is contributed by Ser-22. The short motif at 39–44 (HTIGVE) is the Switch 1 element. 2 residues coordinate Mg(2+): Thr-40 and Asp-63. The short motif at 65-74 (AGQERFRSVT) is the Switch 2 element. Gly-66 contributes to the GTP binding site. 5-glutamyl serotonin is present on Gln-67. The GDP site is built by Asn-121, Lys-122, Asp-124, Ala-152, and Leu-153. GTP contacts are provided by Asn-121, Lys-122, Asp-124, Ala-152, and Leu-153. Residues Ser-185 and Ser-193 each carry the phosphoserine modification. Residues Cys-211 and Cys-213 are each lipidated (S-geranylgeranyl cysteine). Position 213 is a cysteine methyl ester (Cys-213).

This sequence belongs to the small GTPase superfamily. Rab family. Interacts (GTP-bound form) with RUFY1; the interaction allows endosomal tethering and fusion. The cofactor is Mg(2+). Post-translationally, serotonylation of Gln-67 by TGM2 during activation and aggregation of platelets leads to constitutive activation of GTPase activity.

It is found in the cell membrane. The protein resides in the early endosome membrane. It catalyses the reaction GTP + H2O = GDP + phosphate + H(+). Regulated by guanine nucleotide exchange factors (GEFs) which promote the exchange of bound GDP for free GTP. Regulated by GTPase activating proteins (GAPs) which increase the GTP hydrolysis activity. Inhibited by GDP dissociation inhibitors (GDIs). The small GTPases Rab are key regulators of intracellular membrane trafficking, from the formation of transport vesicles to their fusion with membranes. Rabs cycle between an inactive GDP-bound form and an active GTP-bound form that is able to recruit to membranes different set of downstream effectors directly responsible for vesicle formation, movement, tethering and fusion. RAB4B mediates endosomal tethering and fusion through the interaction with RUFY1 and RAB14. Acts as a regulator of platelet alpha-granule release during activation and aggregation of platelets. In Homo sapiens (Human), this protein is Ras-related protein Rab-4B.